A 206-amino-acid chain; its full sequence is Large ribosomal subunit protein uL4 (206 aa).

A disordered region spans residues 43–78; it reads ARSGNRKQKDREEVHHTTKKPWRQKGTGRARAGMSS. Over residues 49–58 the composition is skewed to basic and acidic residues; the sequence is KQKDREEVHH. Positions 59–70 are enriched in basic residues; that stretch reads TTKKPWRQKGTG.

It belongs to the universal ribosomal protein uL4 family. In terms of assembly, part of the 50S ribosomal subunit.

One of the primary rRNA binding proteins, this protein initially binds near the 5'-end of the 23S rRNA. It is important during the early stages of 50S assembly. It makes multiple contacts with different domains of the 23S rRNA in the assembled 50S subunit and ribosome. Functionally, forms part of the polypeptide exit tunnel. This Herminiimonas arsenicoxydans protein is Large ribosomal subunit protein uL4.